The following is a 314-amino-acid chain: Acetaldehyde dehydrogenase 2 (314 aa).

NAD(+) is bound at residue 15–18 (SGNI). The active-site Acyl-thioester intermediate is the Cys133. Residues 164–172 (SAGPGTRAN) and Asn291 contribute to the NAD(+) site.

The protein belongs to the acetaldehyde dehydrogenase family.

The catalysed reaction is acetaldehyde + NAD(+) + CoA = acetyl-CoA + NADH + H(+). This is Acetaldehyde dehydrogenase 2 from Pseudomonas putida (strain ATCC 700007 / DSM 6899 / JCM 31910 / BCRC 17059 / LMG 24140 / F1).